The sequence spans 115 residues: Xenovulene A biosynthesis cluster protein asL2 (115 aa).

Its function is as follows. Part of the gene cluster that mediates the biosynthesis of xenovulene A, an unusual meroterpenoid that has potent inhibitory effects on the human gamma-aminobutyrate A (GABAA) benzodiazepine receptor. The first step of xenovulene A biosynthesis is the biosynthesis of 3-methylorcinaldehyde performed by the non-reducing polyketide synthase aspks1. The salicylate hydroxylase asL1 then catalyzes the oxidative dearomatization of 3-methylorcinaldehyde to yield a dearomatized hydroxycyclohexadione. The 2-oxoglutarate-dependent dioxygenase asL3 further catalyzes the oxidative ring expansion to provide the first tropolone metabolite. The cytochrome P450 monooxygenase asR2 allows the synthesis of tropolone hemiacetal. In parallel, a previously unrecognised class of terpene cyclase, asR6, produces alpha-humulene from farnesylpyrophosphate (FPP). The putative Diels-Alderase asR5 probably catalyzes the formation of the tropolone-humulene skeleton by linking humulene and the polyketide moiety. Oxidative-ring contractions catalyzed by asL4 and asL6 then processively remove carbon atoms from the polyketide to yield xenovulene A. The protein is Xenovulene A biosynthesis cluster protein asL2 of Sarocladium schorii (Acremonium strictum (strain IMI 501407)).